The following is a 614-amino-acid chain: UPF0329 protein ECU03_0090 (614 aa).

Basic and acidic residues-rich tracts occupy residues 317–338 and 345–354; these read EREE…EESL and LRMEEKEKSK. Positions 317–420 are disordered; that stretch reads EREEAEKMRG…KKSRSKGHRY (104 aa). Basic residues predominate over residues 355–364; sequence SRGKKKKGGK. Basic and acidic residues predominate over residues 372 to 381; that stretch reads AKMEEEKKDS. The segment covering 382 to 394 has biased composition (acidic residues); it reads EEVEESAEAEVSL. Residues 408–420 are compositionally biased toward basic residues; sequence SSKKKSRSKGHRY.

It belongs to the UPF0329 family.

The sequence is that of UPF0329 protein ECU03_0090 from Encephalitozoon cuniculi (strain GB-M1) (Microsporidian parasite).